Consider the following 487-residue polypeptide: uncharacterized protein (487 aa).

Residues histidine 7–tyrosine 28 form a helical membrane-spanning segment. N-linked (GlcNAc...) asparagine; by host glycans are attached at residues asparagine 73, asparagine 83, and asparagine 195. A coiled-coil region spans residues arginine 196 to glutamine 235. Polar residues predominate over residues threonine 294–asparagine 305. The disordered stretch occupies residues threonine 294–valine 324. N-linked (GlcNAc...) asparagine; by host glycosylation occurs at asparagine 462.

Belongs to the asfivirus B475L family.

The protein localises to the host membrane. This is an uncharacterized protein from African swine fever virus (isolate Tick/South Africa/Pretoriuskop Pr4/1996) (ASFV).